The sequence spans 429 residues: UPF0597 protein BT_2080 (429 aa).

Belongs to the UPF0597 family.

The protein is UPF0597 protein BT_2080 of Bacteroides thetaiotaomicron (strain ATCC 29148 / DSM 2079 / JCM 5827 / CCUG 10774 / NCTC 10582 / VPI-5482 / E50).